We begin with the raw amino-acid sequence, 1004 residues long: Glutamate [NMDA] receptor subunit 1 (1004 aa).

A signal peptide spans 1-39; sequence MAGTDSPAAARFVYRCLLFAPAIVVGLLLPLTLPPIAAA. Over 40 to 585 the chain is Extracellular; sequence QRHTASDNPS…TLVSFLQPFS (546 aa). 7 N-linked (GlcNAc...) asparagine glycosylation sites follow: N270, N326, N357, N409, N466, N493, and N513. Glycine is bound by residues 542–544 and R549; that span reads PLT. Residues 586–606 traverse the membrane as a helical segment; the sequence is NTLWILVMVSVHVVALVLYLL. Topologically, residues 607–663 are cytoplasmic; that stretch reads DRFSPFGRFKLSHSDSNEEKALNLSSAVWFAWGVLLNSGIGEGTPRSFSARVLGMVW. The chain crosses the membrane as a helical span at residues 664-684; sequence AGFAMIIVASYTANLAAFLVL. Residues 685-843 lie on the Extracellular side of the membrane; it reads ERPKTKLSGI…KTPNTLGLKN (159 aa). A glycan (N-linked (GlcNAc...) asparagine) is linked at N705. Residues S715 and D759 each coordinate glycine. A helical membrane pass occupies residues 844 to 864; sequence MAGVFILVGVGIAGGVGLIII. The Cytoplasmic segment spans residues 865–1004; that stretch reads EVIYKKHQVK…YTSDVSHLVV (140 aa). A disordered region spans residues 980-1004; the sequence is TRPQQNILPPRYSPGYTSDVSHLVV. Over residues 994-1004 the composition is skewed to polar residues; sequence GYTSDVSHLVV.

It belongs to the glutamate-gated ion channel (TC 1.A.10.1) family. As to quaternary structure, forms a heteromeric NMDA channel with Nmdar2.

The protein resides in the cell membrane. The protein localises to the postsynaptic cell membrane. It localises to the postsynaptic density. NMDA receptor subtype of glutamate-gated ion channels with high calcium permeability and voltage-dependent sensitivity to magnesium. Mediated by glycine. This protein plays a key role in synaptic plasticity, synaptogenesis, excitotoxicity, memory acquisition and learning. It mediates neuronal functions in glutamate neurotransmission. Is involved in the cell surface targeting of NMDA receptors. Plays a role in associative learning and in long-term memory consolidation. The protein is Glutamate [NMDA] receptor subunit 1 of Drosophila persimilis (Fruit fly).